We begin with the raw amino-acid sequence, 354 residues long: Ion-translocating oxidoreductase complex subunit D (354 aa).

Transmembrane regions (helical) follow at residues 19–39 (IMLWVILAMLPAIFAQLYYFG), 40–60 (FGVLFQITIAVVFALCLEFLV), 70–89 (FYISDFSVTLTALILAVAIP), 94–116 (YWIILIGIFCAVILGKHVYGGLG), and 123–143 (AMVGYVVLLVSFPMQMTTWLA). The residue at position 186 (threonine 186) is an FMN phosphoryl threonine. Helical transmembrane passes span 215-235 (LAGLGWFQVNLAFLLGGLFLV), 242-262 (WQIPTALLITVCLFSLCSWLF), 266-286 (MPSPLWQLFSGATMFCAFFIA), 300-320 (LVFGVLVGLLLCLIRFYGGYP), and 321-341 (DGAAFAILLANICVPLIDQYT).

This sequence belongs to the NqrB/RnfD family. As to quaternary structure, the complex is composed of six subunits: RnfA, RnfB, RnfC, RnfD, RnfE and RnfG. The cofactor is FMN.

It localises to the cell inner membrane. Part of a membrane-bound complex that couples electron transfer with translocation of ions across the membrane. The polypeptide is Ion-translocating oxidoreductase complex subunit D (Mannheimia succiniciproducens (strain KCTC 0769BP / MBEL55E)).